The primary structure comprises 490 residues: Lysine--tRNA ligase (490 aa).

2 residues coordinate Mg(2+): Glu398 and Glu405.

The protein belongs to the class-II aminoacyl-tRNA synthetase family. As to quaternary structure, homodimer. Requires Mg(2+) as cofactor.

The protein localises to the cytoplasm. It catalyses the reaction tRNA(Lys) + L-lysine + ATP = L-lysyl-tRNA(Lys) + AMP + diphosphate. The polypeptide is Lysine--tRNA ligase (Metamycoplasma arthritidis (strain 158L3-1) (Mycoplasma arthritidis)).